The chain runs to 233 residues: Large ribosomal subunit protein uL1 (233 aa).

It belongs to the universal ribosomal protein uL1 family. Part of the 50S ribosomal subunit.

In terms of biological role, binds directly to 23S rRNA. The L1 stalk is quite mobile in the ribosome, and is involved in E site tRNA release. Its function is as follows. Protein L1 is also a translational repressor protein, it controls the translation of the L11 operon by binding to its mRNA. The chain is Large ribosomal subunit protein uL1 from Pelobacter propionicus (strain DSM 2379 / NBRC 103807 / OttBd1).